Here is a 448-residue protein sequence, read N- to C-terminus: Dual specificity mitogen-activated protein kinase kinase 5 (448 aa).

An interaction with MAPK7 region spans residues 18 to 25 (VIRIKIPN). The PB1 domain maps to 18–109 (VIRIKIPNSG…EPLQIFPRAC (92 aa)). The tract at residues 64–68 (DEDGD) is interaction with MAP3K2/MAP3K3. Residues 116–144 (NIHGLKVNTRAGPSQHTSPVVSDSLPSNS) form a disordered region. An interaction with MAPK7 region spans residues 117 to 131 (IHGLKVNTRAGPSQH). The span at 126 to 144 (AGPSQHTSPVVSDSLPSNS) shows a compositional bias: polar residues. Positions 166–419 (IRYRDTLGHG…PEELMGHPFI (254 aa)) constitute a Protein kinase domain. ATP contacts are provided by residues 172-180 (LGHGNGGTV) and Lys-195. Residue Asp-283 is the Proton acceptor of the active site. Residue Ser-311 is modified to Phosphoserine. Thr-315 is modified (phosphothreonine).

It belongs to the protein kinase superfamily. STE Ser/Thr protein kinase family. MAP kinase kinase subfamily. Interacts with PARD6A, MAP3K3 and MAPK7. Forms a complex with SQSTM1 and PRKCZ or PRKCI. Mg(2+) serves as cofactor. In terms of processing, activated by phosphorylation on Ser/Thr by MAP kinase kinase kinases. In terms of tissue distribution, expressed in the liver and brain (at protein level). As to expression, expressed in the liver, muscle, testes, lung, kidney, spleen, heart and brain (at protein level).

The protein localises to the cytoplasm. The protein resides in the cytosol. It is found in the membrane. It carries out the reaction L-seryl-[protein] + ATP = O-phospho-L-seryl-[protein] + ADP + H(+). The enzyme catalyses L-threonyl-[protein] + ATP = O-phospho-L-threonyl-[protein] + ADP + H(+). It catalyses the reaction L-tyrosyl-[protein] + ATP = O-phospho-L-tyrosyl-[protein] + ADP + H(+). Its function is as follows. Acts as a scaffold for the formation of a ternary MAP3K2/MAP3K3-MAP3K5-MAPK7 signaling complex. Activation of this pathway appears to play a critical role in protecting cells from stress-induced apoptosis, neuronal survival and cardiac development and angiogenesis. As part of the MAPK/ERK signaling pathway, acts as a negative regulator of apoptosis in cardiomyocytes via promotion of STUB1/CHIP-mediated ubiquitination and degradation of ICER-type isoforms of CREM. This is Dual specificity mitogen-activated protein kinase kinase 5 (Map2k5) from Rattus norvegicus (Rat).